The chain runs to 375 residues: Growth/differentiation factor 8 (375 aa).

The signal sequence occupies residues 1–18 (MQKLQIFVYIYLFMLTVA). Residues 19-266 (GPVDLNENSE…VTDTPKRARR (248 aa)) constitute a propeptide that is removed on maturation. N48 and N71 each carry an N-linked (GlcNAc...) asparagine glycan. Cystine bridges form between C272-C282, C281-C340, C309-C372, and C313-C374.

The protein belongs to the TGF-beta family. In terms of assembly, homodimer; disulfide-linked. Interacts with WFIKKN2, leading to inhibit its activity. Interacts with FSTL3. In terms of processing, synthesized as large precursor molecule that undergoes proteolytic cleavage to generate an N-terminal propeptide and a disulfide linked C-terminal dimer, which is the biologically active molecule. The circulating form consists of a latent complex of the C-terminal dimer and other proteins, including its propeptide, which maintain the C-terminal dimer in a latent, inactive state. Ligand activation requires additional cleavage of the prodomain by a tolloid-like metalloproteinase.

Its subcellular location is the secreted. Functionally, acts specifically as a negative regulator of skeletal muscle growth. The chain is Growth/differentiation factor 8 (MSTN) from Sylvicapra grimmia (Grey duiker).